Reading from the N-terminus, the 85-residue chain is Protein AC4 (85 aa).

Gly2 carries the N-myristoyl glycine; by host lipid modification.

The protein belongs to the geminiviridae protein AC4/C4 family. Interacts with Arabidopsis thaliana ASK7/ASK-eta and ASK6/ASK-zeta proteins. Post-translationally, phosphorylated by Arabidopsis thaliana ASK7/ASK-eta mainly on threonine and serine residues.

Its subcellular location is the host cell membrane. In terms of biological role, pathogenicity determinant. May act as a suppressor of RNA-mediated gene silencing, also known as post-transcriptional gene silencing (PTGS), a mechanism of plant viral defense that limits the accumulation of viral RNAs. May repress the AL61 promoter. This Solanum lycopersicum (Tomato) protein is Protein AC4.